Consider the following 897-residue polypeptide: Alanine--tRNA ligase (897 aa).

Zn(2+) contacts are provided by His581, His585, Cys684, and His688.

The protein belongs to the class-II aminoacyl-tRNA synthetase family. The cofactor is Zn(2+).

Its subcellular location is the cytoplasm. The catalysed reaction is tRNA(Ala) + L-alanine + ATP = L-alanyl-tRNA(Ala) + AMP + diphosphate. In terms of biological role, catalyzes the attachment of alanine to tRNA(Ala) in a two-step reaction: alanine is first activated by ATP to form Ala-AMP and then transferred to the acceptor end of tRNA(Ala). Also edits incorrectly charged Ser-tRNA(Ala) and Gly-tRNA(Ala) via its editing domain. In Mycobacterium sp. (strain JLS), this protein is Alanine--tRNA ligase.